We begin with the raw amino-acid sequence, 259 residues long: MTNTALPTSSADQENDTQLNELHKSQNAVVLLSGGLDSVTCLYWAKARYASVTAVSFDYGQRHNSELVAAKAIAETAGVNHRIIDIDIAQLGGSSLTDHSMIVPDGDTDKFPDKKRDEIDNDAIPNTYVPARNTIFLSYALAVAEVTDSNHIVIGVSSVDYSGYPDCRPEYIAAFQHMANLATKAGVTGHHLSIQTPLQQLSKAKTIELGLSLGVDYGQTISCYQADANGLACGVCDSCALRRQGFAQAGVADPTHYQS.

Position 32-42 (32-42) interacts with ATP; the sequence is LSGGLDSVTCL. Positions 223, 233, 236, and 239 each coordinate Zn(2+).

It belongs to the QueC family. Zn(2+) serves as cofactor.

It carries out the reaction 7-carboxy-7-deazaguanine + NH4(+) + ATP = 7-cyano-7-deazaguanine + ADP + phosphate + H2O + H(+). It participates in purine metabolism; 7-cyano-7-deazaguanine biosynthesis. Its function is as follows. Catalyzes the ATP-dependent conversion of 7-carboxy-7-deazaguanine (CDG) to 7-cyano-7-deazaguanine (preQ(0)). In Psychrobacter cryohalolentis (strain ATCC BAA-1226 / DSM 17306 / VKM B-2378 / K5), this protein is 7-cyano-7-deazaguanine synthase.